Reading from the N-terminus, the 250-residue chain is MSGHSKWATTKHKKAVIDAKRGKAFAKLIKNIEVAARTGGGDPAGNPTLYDAIQKAKKTSVPNDNIERARKRGAGEEAGGADWQTIMYEGYGPNGVAVLIECLTDNRNRAAGEVRTAMTRNGGNMADPGSVSYLFTRKGVVTLEKGDQTEDDVLMAVLDAGAEEVTDLGETFEIVSEPTDLVAVRSALQEAGIDYDSAEADFRASVEVPVDADGARKVFKLVDALEESDDVQNVYTNVDLSDEVLAELDD.

This sequence belongs to the TACO1 family.

It localises to the cytoplasm. The protein is Probable transcriptional regulatory protein ROP_68700 of Rhodococcus opacus (strain B4).